A 141-amino-acid chain; its full sequence is Transcription antitermination protein NusB (141 aa).

The protein belongs to the NusB family.

Functionally, involved in transcription antitermination. Required for transcription of ribosomal RNA (rRNA) genes. Binds specifically to the boxA antiterminator sequence of the ribosomal RNA (rrn) operons. This Neisseria gonorrhoeae (strain ATCC 700825 / FA 1090) protein is Transcription antitermination protein NusB.